The chain runs to 524 residues: Anthranilate synthase component 1 (524 aa).

Residues 1 to 16 (MQTTANHSSRSTQTGT) show a composition bias toward polar residues. Positions 1-25 (MQTTANHSSRSTQTGTRAHGAALAE) are disordered. L-tryptophan contacts are provided by residues Ser-74 and 298–300 (PYM). 339-340 (GT) is a binding site for chorismate. Residue Lys-355 forms an Isoglutamyl lysine isopeptide (Lys-Gln) (interchain with Q-Cter in protein Pup) linkage. Residue Glu-366 coordinates Mg(2+). Residues Tyr-454, Arg-474, 488 to 490 (GGG), and Gly-490 contribute to the chorismate site. Glu-503 contributes to the Mg(2+) binding site.

The protein belongs to the anthranilate synthase component I family. In terms of assembly, heterotetramer consisting of two non-identical subunits: a beta subunit (TrpG) and a large alpha subunit (TrpE). Mg(2+) is required as a cofactor.

The enzyme catalyses chorismate + L-glutamine = anthranilate + pyruvate + L-glutamate + H(+). It participates in amino-acid biosynthesis; L-tryptophan biosynthesis; L-tryptophan from chorismate: step 1/5. Feedback inhibited by tryptophan. Its function is as follows. Part of a heterotetrameric complex that catalyzes the two-step biosynthesis of anthranilate, an intermediate in the biosynthesis of L-tryptophan. In the first step, the glutamine-binding beta subunit (TrpG) of anthranilate synthase (AS) provides the glutamine amidotransferase activity which generates ammonia as a substrate that, along with chorismate, is used in the second step, catalyzed by the large alpha subunit of AS (TrpE) to produce anthranilate. In the absence of TrpG, TrpE can synthesize anthranilate directly from chorismate and high concentrations of ammonia. The protein is Anthranilate synthase component 1 (trpE) of Mycolicibacterium smegmatis (strain ATCC 700084 / mc(2)155) (Mycobacterium smegmatis).